We begin with the raw amino-acid sequence, 272 residues long: Ethanolamine ammonia-lyase small subunit (272 aa).

3 residues coordinate adenosylcob(III)alamin: Val161, Glu182, and Cys211.

Belongs to the EutC family. The basic unit is a heterodimer which dimerizes to form tetramers. The heterotetramers trimerize; 6 large subunits form a core ring with 6 small subunits projecting outwards. Adenosylcob(III)alamin is required as a cofactor.

The protein localises to the bacterial microcompartment. The enzyme catalyses ethanolamine = acetaldehyde + NH4(+). It participates in amine and polyamine degradation; ethanolamine degradation. Functionally, catalyzes the deamination of various vicinal amino-alcohols to oxo compounds. Allows this organism to utilize ethanolamine as the sole source of nitrogen and carbon in the presence of external vitamin B12. This Pseudomonas putida (strain ATCC 47054 / DSM 6125 / CFBP 8728 / NCIMB 11950 / KT2440) protein is Ethanolamine ammonia-lyase small subunit.